The primary structure comprises 107 residues: Nucleoid-associated protein PPA0205 (107 aa).

Belongs to the YbaB/EbfC family. In terms of assembly, homodimer.

It is found in the cytoplasm. The protein localises to the nucleoid. In terms of biological role, binds to DNA and alters its conformation. May be involved in regulation of gene expression, nucleoid organization and DNA protection. The protein is Nucleoid-associated protein PPA0205 of Cutibacterium acnes (strain DSM 16379 / KPA171202) (Propionibacterium acnes).